The following is a 178-amino-acid chain: Large ribosomal subunit protein uL6 (178 aa).

This sequence belongs to the universal ribosomal protein uL6 family. As to quaternary structure, part of the 50S ribosomal subunit.

Functionally, this protein binds to the 23S rRNA, and is important in its secondary structure. It is located near the subunit interface in the base of the L7/L12 stalk, and near the tRNA binding site of the peptidyltransferase center. In Staphylococcus epidermidis (strain ATCC 35984 / DSM 28319 / BCRC 17069 / CCUG 31568 / BM 3577 / RP62A), this protein is Large ribosomal subunit protein uL6.